A 746-amino-acid polypeptide reads, in one-letter code: Centromere protein I (746 aa).

The tract at residues 1–24 (MATQRVTRNSQQQNRISQGSNSRQ) is disordered.

The protein belongs to the CENP-I/CTF3 family. Component of the CENPA-CAD complex, composed of CENPI, CENPK, CENPL, CENPO, CENPP, CENPQ, CENPR and CENPS. The CENPA-CAD complex interacts with the CENPA-NAC complex, at least composed of CENPA, CENPC, CENPH, CENPM, CENPN, CENPT and CENPU. Interacts with SENP6. Post-translationally, sumoylated. Sumoylated form can be polyubiquitinated by RNF4, leading to its degradation. Desumoylation by SENP6 prevents its degradation.

The protein localises to the nucleus. The protein resides in the chromosome. Its subcellular location is the centromere. Its function is as follows. Component of the CENPA-CAD (nucleosome distal) complex, a complex recruited to centromeres which is involved in assembly of kinetochore proteins, mitotic progression and chromosome segregation. May be involved in incorporation of newly synthesized CENPA into centromeres via its interaction with the CENPA-NAC complex. Required for the localization of CENPF, MAD1L1 and MAD2 (MAD2L1 or MAD2L2) to kinetochores. Involved in the response of gonadal tissues to follicle-stimulating hormone. The chain is Centromere protein I (Cenpi) from Mus musculus (Mouse).